A 249-amino-acid polypeptide reads, in one-letter code: 2,3-bisphosphoglycerate-dependent phosphoglycerate mutase (249 aa).

Substrate contacts are provided by residues 8-15 (RHGESVWN), 21-22 (TG), arginine 60, 87-90 (ERHY), lysine 98, 114-115 (RR), and 183-184 (GN). Residue histidine 9 is the Tele-phosphohistidine intermediate of the active site. Glutamate 87 functions as the Proton donor/acceptor in the catalytic mechanism.

Belongs to the phosphoglycerate mutase family. BPG-dependent PGAM subfamily.

The enzyme catalyses (2R)-2-phosphoglycerate = (2R)-3-phosphoglycerate. It participates in carbohydrate degradation; glycolysis; pyruvate from D-glyceraldehyde 3-phosphate: step 3/5. Functionally, catalyzes the interconversion of 2-phosphoglycerate and 3-phosphoglycerate. The polypeptide is 2,3-bisphosphoglycerate-dependent phosphoglycerate mutase (Endomicrobium trichonymphae).